The following is a 77-amino-acid chain: Probable Vpr-like protein (77 aa).

The short motif at 34 to 42 is the Nuclear export signal element; that stretch reads LIRLLQGLL. The Nuclear localization signal signature appears at 44–53; sequence RLRFRKPKSK.

The protein localises to the virion. It is found in the host nucleus. Functionally, seems to function as a Vpr-like protein, since it mediates host cell cycle arrest in G2 phase. Cell cycle arrest creates a favorable environment for maximizing viral expression and production. The protein is Probable Vpr-like protein of Felidae (cat family).